A 382-amino-acid chain; its full sequence is Sulfate adenylyltransferase (382 aa).

This sequence belongs to the sulfate adenylyltransferase family.

It catalyses the reaction sulfate + ATP + H(+) = adenosine 5'-phosphosulfate + diphosphate. Its pathway is sulfur metabolism; hydrogen sulfide biosynthesis; sulfite from sulfate: step 1/3. The polypeptide is Sulfate adenylyltransferase (Ignicoccus hospitalis (strain KIN4/I / DSM 18386 / JCM 14125)).